The primary structure comprises 157 residues: 2-C-methyl-D-erythritol 2,4-cyclodiphosphate synthase (157 aa).

Residues aspartate 9 and histidine 11 each coordinate a divalent metal cation. 4-CDP-2-C-methyl-D-erythritol 2-phosphate contacts are provided by residues 9–11 (DVH) and 35–36 (HS). Position 43 (histidine 43) interacts with a divalent metal cation. 4-CDP-2-C-methyl-D-erythritol 2-phosphate-binding positions include 57–59 (DIG), 62–66 (FPDTD), 101–107 (AEKPKMA), 133–136 (TTTE), phenylalanine 140, and arginine 143.

Belongs to the IspF family. In terms of assembly, homotrimer. Requires a divalent metal cation as cofactor.

It catalyses the reaction 4-CDP-2-C-methyl-D-erythritol 2-phosphate = 2-C-methyl-D-erythritol 2,4-cyclic diphosphate + CMP. It functions in the pathway isoprenoid biosynthesis; isopentenyl diphosphate biosynthesis via DXP pathway; isopentenyl diphosphate from 1-deoxy-D-xylulose 5-phosphate: step 4/6. Involved in the biosynthesis of isopentenyl diphosphate (IPP) and dimethylallyl diphosphate (DMAPP), two major building blocks of isoprenoid compounds. Catalyzes the conversion of 4-diphosphocytidyl-2-C-methyl-D-erythritol 2-phosphate (CDP-ME2P) to 2-C-methyl-D-erythritol 2,4-cyclodiphosphate (ME-CPP) with a corresponding release of cytidine 5-monophosphate (CMP). The protein is 2-C-methyl-D-erythritol 2,4-cyclodiphosphate synthase of Listeria monocytogenes serovar 1/2a (strain ATCC BAA-679 / EGD-e).